The chain runs to 157 residues: Phosphopantetheine adenylyltransferase (157 aa).

Substrate is bound at residue Ser-8. ATP contacts are provided by residues Ser-8–Phe-9 and His-16. 3 residues coordinate substrate: Lys-40, Thr-72, and Arg-86. ATP contacts are provided by residues Gly-87–Arg-89, Glu-97, and His-122–Ser-128.

This sequence belongs to the bacterial CoaD family. In terms of assembly, homohexamer. Mg(2+) serves as cofactor.

It is found in the cytoplasm. The catalysed reaction is (R)-4'-phosphopantetheine + ATP + H(+) = 3'-dephospho-CoA + diphosphate. Its pathway is cofactor biosynthesis; coenzyme A biosynthesis; CoA from (R)-pantothenate: step 4/5. Its function is as follows. Reversibly transfers an adenylyl group from ATP to 4'-phosphopantetheine, yielding dephospho-CoA (dPCoA) and pyrophosphate. The protein is Phosphopantetheine adenylyltransferase of Prochlorococcus marinus (strain MIT 9303).